We begin with the raw amino-acid sequence, 55 residues long: ATP synthase F(0) complex subunit 8 (55 aa).

Residues Asn-7–Ile-24 form a helical membrane-spanning segment. The tract at residues Asn-35–Thr-55 is disordered. Residues Pro-37–Thr-55 show a composition bias toward low complexity.

It belongs to the ATPase protein 8 family. As to quaternary structure, component of the ATP synthase complex composed at least of ATP5F1A/subunit alpha, ATP5F1B/subunit beta, ATP5MC1/subunit c (homooctomer), MT-ATP6/subunit a, MT-ATP8/subunit 8, ATP5ME/subunit e, ATP5MF/subunit f, ATP5MG/subunit g, ATP5MK/subunit k, ATP5MJ/subunit j, ATP5F1C/subunit gamma, ATP5F1D/subunit delta, ATP5F1E/subunit epsilon, ATP5PF/subunit F6, ATP5PB/subunit b, ATP5PD/subunit d, ATP5PO/subunit OSCP. ATP synthase complex consists of a soluble F(1) head domain (subunits alpha(3) and beta(3)) - the catalytic core - and a membrane F(0) domain - the membrane proton channel (subunits c, a, 8, e, f, g, k and j). These two domains are linked by a central stalk (subunits gamma, delta, and epsilon) rotating inside the F1 region and a stationary peripheral stalk (subunits F6, b, d, and OSCP).

It is found in the mitochondrion membrane. Its function is as follows. Subunit 8, of the mitochondrial membrane ATP synthase complex (F(1)F(0) ATP synthase or Complex V) that produces ATP from ADP in the presence of a proton gradient across the membrane which is generated by electron transport complexes of the respiratory chain. ATP synthase complex consist of a soluble F(1) head domain - the catalytic core - and a membrane F(1) domain - the membrane proton channel. These two domains are linked by a central stalk rotating inside the F(1) region and a stationary peripheral stalk. During catalysis, ATP synthesis in the catalytic domain of F(1) is coupled via a rotary mechanism of the central stalk subunits to proton translocation. In vivo, can only synthesize ATP although its ATP hydrolase activity can be activated artificially in vitro. Part of the complex F(0) domain. The chain is ATP synthase F(0) complex subunit 8 from Chaetura pelagica (Chimney swift).